The chain runs to 863 residues: Envelope glycoprotein gp160 (863 aa).

The signal sequence occupies residues Met1–Glu31. The Extracellular portion of the chain corresponds to Asp32 to Ile691. A disulfide bond links Cys53 and Cys73. Residues Asn87, Asn129, Asn136, Asn142, Asn143, Asn159, Asn163, Asn194, Asn199, Asn209, Asn246, Asn274, Asn288, Asn301, and Asn307 are each glycosylated (N-linked (GlcNAc...) asparagine; by host). Intrachain disulfides connect Cys118-Cys217, Cys125-Cys208, Cys130-Cys160, Cys230-Cys259, and Cys240-Cys251. Positions Cys130–Asn159 are V1. The interval Cys160 to Cys208 is V2. The V3 stretch occupies residues Cys308–Tyr341. A disulfide bridge connects residues Cys308 and Cys342. Asn343, Asn350, and Asn365 each carry an N-linked (GlcNAc...) asparagine; by host glycan. The tract at residues Pro374–His384 is CD4-binding loop. Intrachain disulfides connect Cys388–Cys452 and Cys395–Cys425. The interval Cys395 to Cys425 is V4. Asn396, Asn402, Asn406, Asn412, Asn455, Asn468, Asn469, and Asn472 each carry an N-linked (GlcNAc...) asparagine; by host glycan. V5 regions lie at residues Val467–Gly478 and Ser470–Gly478. The segment at Ala519–Ala539 is fusion peptide. Positions Lys581–Leu599 are immunosuppression. The cysteines at positions 605 and 611 are disulfide-linked. 4 N-linked (GlcNAc...) asparagine; by host glycosylation sites follow: Asn618, Asn623, Asn632, and Asn644. The stretch at Arg640 to Ala674 forms a coiled coil. Residues Gln669–Lys690 are MPER; binding to GalCer. A helical membrane pass occupies residues Phe692–Val712. Topologically, residues Asn713–Leu863 are cytoplasmic. The short motif at Tyr719–Leu722 is the YXXL motif; contains endocytosis signal element. Positions Pro729–Gly748 are disordered. A lipid anchor (S-palmitoyl cysteine; by host) is attached at Cys771. Residues Leu862 to Leu863 carry the Di-leucine internalization motif motif.

Belongs to the HIV-1 env protein family. The mature envelope protein (Env) consists of a homotrimer of non-covalently associated gp120-gp41 heterodimers. The resulting complex protrudes from the virus surface as a spike. There seems to be as few as 10 spikes on the average virion. Interacts with host CD4, CCR5 and CXCR4. Gp120 also interacts with the C-type lectins CD209/DC-SIGN and CLEC4M/DC-SIGNR (collectively referred to as DC-SIGN(R)). Gp120 and gp41 interact with GalCer. Gp120 interacts with host ITGA4/ITGB7 complex; on CD4+ T-cells, this interaction results in rapid activation of integrin ITGAL/LFA-1, which facilitates efficient cell-to-cell spreading of HIV-1. Gp120 interacts with cell-associated heparan sulfate; this interaction increases virus infectivity on permissive cells and may be involved in infection of CD4- cells. In terms of assembly, the mature envelope protein (Env) consists of a homotrimer of non-covalently associated gp120-gp41 heterodimers. The resulting complex protrudes from the virus surface as a spike. There seems to be as few as 10 spikes on the average virion. In terms of processing, highly glycosylated by host. The high number of glycan on the protein is reffered to as 'glycan shield' because it contributes to hide protein sequence from adaptive immune system. Post-translationally, palmitoylation of the transmembrane protein and of Env polyprotein (prior to its proteolytic cleavage) is essential for their association with host cell membrane lipid rafts. Palmitoylation is therefore required for envelope trafficking to classical lipid rafts, but not for viral replication. Specific enzymatic cleavages in vivo yield mature proteins. Envelope glycoproteins are synthesized as an inactive precursor that is heavily N-glycosylated and processed likely by host cell furin in the Golgi to yield the mature SU and TM proteins. The cleavage site between SU and TM requires the minimal sequence [KR]-X-[KR]-R. About 2 of the 9 disulfide bonds of gp41 are reduced by P4HB/PDI, following binding to CD4 receptor.

The protein resides in the virion membrane. It localises to the host cell membrane. It is found in the host endosome membrane. Oligomerizes in the host endoplasmic reticulum into predominantly trimers. In a second time, gp160 transits in the host Golgi, where glycosylation is completed. The precursor is then proteolytically cleaved in the trans-Golgi and thereby activated by cellular furin or furin-like proteases to produce gp120 and gp41. Functionally, attaches the virus to the host lymphoid cell by binding to the primary receptor CD4. This interaction induces a structural rearrangement creating a high affinity binding site for a chemokine coreceptor like CXCR4 and/or CCR5. Acts as a ligand for CD209/DC-SIGN and CLEC4M/DC-SIGNR, which are respectively found on dendritic cells (DCs), and on endothelial cells of liver sinusoids and lymph node sinuses. These interactions allow capture of viral particles at mucosal surfaces by these cells and subsequent transmission to permissive cells. HIV subverts the migration properties of dendritic cells to gain access to CD4+ T-cells in lymph nodes. Virus transmission to permissive T-cells occurs either in trans (without DCs infection, through viral capture and transmission), or in cis (following DCs productive infection, through the usual CD4-gp120 interaction), thereby inducing a robust infection. In trans infection, bound virions remain infectious over days and it is proposed that they are not degraded, but protected in non-lysosomal acidic organelles within the DCs close to the cell membrane thus contributing to the viral infectious potential during DCs' migration from the periphery to the lymphoid tissues. On arrival at lymphoid tissues, intact virions recycle back to DCs' cell surface allowing virus transmission to CD4+ T-cells. Its function is as follows. Acts as a class I viral fusion protein. Under the current model, the protein has at least 3 conformational states: pre-fusion native state, pre-hairpin intermediate state, and post-fusion hairpin state. During fusion of viral and target intracellular membranes, the coiled coil regions (heptad repeats) assume a trimer-of-hairpins structure, positioning the fusion peptide in close proximity to the C-terminal region of the ectodomain. The formation of this structure appears to drive apposition and subsequent fusion of viral and target cell membranes. Complete fusion occurs in host cell endosomes and is dynamin-dependent, however some lipid transfer might occur at the plasma membrane. The virus undergoes clathrin-dependent internalization long before endosomal fusion, thus minimizing the surface exposure of conserved viral epitopes during fusion and reducing the efficacy of inhibitors targeting these epitopes. Membranes fusion leads to delivery of the nucleocapsid into the cytoplasm. The chain is Envelope glycoprotein gp160 from Human immunodeficiency virus type 1 group M subtype D (isolate Z84) (HIV-1).